The sequence spans 609 residues: Putative transcriptional regulatory protein y4pA (609 aa).

In terms of domain architecture, Sigma-54 factor interaction spans 313–533 (IVGRSPSIQQ…LRSVLETAAI (221 aa)). ATP is bound at residue 395 to 404 (HPKATLLIES). The segment at residues 578-597 (RGEAARYLGISRKTLYNKMR) is a DNA-binding region (H-T-H motif).

Its function is as follows. Probable transcriptional regulator that acts in conjunction with sigma-54. This is Putative transcriptional regulatory protein y4pA from Sinorhizobium fredii (strain NBRC 101917 / NGR234).